Reading from the N-terminus, the 328-residue chain is Ketol-acid reductoisomerase (NADP(+)) (328 aa).

In terms of domain architecture, KARI N-terminal Rossmann spans 1 to 181; the sequence is MKIYYENDID…GLARAGVLET (181 aa). Residues 24–27, Arg-47, Ser-52, and 82–85 contribute to the NADP(+) site; these read YGSQ and DEIQ. Residue His-107 is part of the active site. Gly-133 contributes to the NADP(+) binding site. Positions 182-327 constitute a KARI C-terminal knotted domain; it reads TFREETETDL…SKLRKLCGLE (146 aa). Mg(2+)-binding residues include Asp-190, Glu-194, Glu-226, and Glu-230. Ser-251 serves as a coordination point for substrate.

This sequence belongs to the ketol-acid reductoisomerase family. It depends on Mg(2+) as a cofactor.

It catalyses the reaction (2R)-2,3-dihydroxy-3-methylbutanoate + NADP(+) = (2S)-2-acetolactate + NADPH + H(+). It carries out the reaction (2R,3R)-2,3-dihydroxy-3-methylpentanoate + NADP(+) = (S)-2-ethyl-2-hydroxy-3-oxobutanoate + NADPH + H(+). The protein operates within amino-acid biosynthesis; L-isoleucine biosynthesis; L-isoleucine from 2-oxobutanoate: step 2/4. It functions in the pathway amino-acid biosynthesis; L-valine biosynthesis; L-valine from pyruvate: step 2/4. Its function is as follows. Involved in the biosynthesis of branched-chain amino acids (BCAA). Catalyzes an alkyl-migration followed by a ketol-acid reduction of (S)-2-acetolactate (S2AL) to yield (R)-2,3-dihydroxy-isovalerate. In the isomerase reaction, S2AL is rearranged via a Mg-dependent methyl migration to produce 3-hydroxy-3-methyl-2-ketobutyrate (HMKB). In the reductase reaction, this 2-ketoacid undergoes a metal-dependent reduction by NADPH to yield (R)-2,3-dihydroxy-isovalerate. The chain is Ketol-acid reductoisomerase (NADP(+)) from Methanothermobacter thermautotrophicus (strain ATCC 29096 / DSM 1053 / JCM 10044 / NBRC 100330 / Delta H) (Methanobacterium thermoautotrophicum).